The sequence spans 248 residues: Probable transcriptional regulatory protein RPC_4807 (248 aa).

The interval 1-21 is disordered; it reads MAGHSQFKNIMHRKGRQDAQK.

It belongs to the TACO1 family.

Its subcellular location is the cytoplasm. The sequence is that of Probable transcriptional regulatory protein RPC_4807 from Rhodopseudomonas palustris (strain BisB18).